Here is a 65-residue protein sequence, read N- to C-terminus: Bacteriocin amylovorin-L (65 aa).

A propeptide spanning residues 1–15 is cleaved from the precursor; that stretch reads MKQLNSEQLQNIIGG. Residues 39 to 59 form a helical membrane-spanning segment; the sequence is LGGVWGAVIGGVGGAAVCGLA.

Active lactobin is composed of two different peptides, one which is lactobin A.

The protein resides in the secreted. It localises to the host cell membrane. Functionally, this heat stable bacteriocin inhibits the growth of closely related Lactobacillus species. It may act as a pore-forming protein, creating a channel in the cell membrane. It kills Lactobacillus helveticus ATCC 15009, but displays no activity towards Listeria species. This Lactobacillus amylovorus protein is Bacteriocin amylovorin-L (amyL).